A 325-amino-acid chain; its full sequence is Clavaminate synthase 2 (325 aa).

Positions 145, 147, and 280 each coordinate Fe cation. Arginine 294 is a 2-oxoglutarate binding site.

This sequence belongs to the clavaminate synthase family. It depends on Fe(2+) as a cofactor.

It carries out the reaction deoxyamidinoproclavaminate + 2-oxoglutarate + O2 = amidinoproclavaminate + succinate + CO2. The catalysed reaction is proclavaminate + 2-oxoglutarate + O2 = dihydroclavaminate + succinate + CO2 + H2O. The enzyme catalyses dihydroclavaminate + 2-oxoglutarate + O2 = clavaminate + succinate + CO2 + H2O. It participates in antibiotic biosynthesis; clavulanate biosynthesis; clavulanate from D-glyceraldehyde 3-phosphate and L-arginine: step 3/8. It functions in the pathway antibiotic biosynthesis; clavulanate biosynthesis; clavulanate from D-glyceraldehyde 3-phosphate and L-arginine: step 5/8. Its pathway is antibiotic biosynthesis; clavulanate biosynthesis; clavulanate from D-glyceraldehyde 3-phosphate and L-arginine: step 6/8. The protein is Clavaminate synthase 2 (cs2) of Streptomyces clavuligerus.